Consider the following 86-residue polypeptide: Small ribosomal subunit protein bS20 (86 aa).

The protein belongs to the bacterial ribosomal protein bS20 family.

Binds directly to 16S ribosomal RNA. This Rhodococcus opacus (strain B4) protein is Small ribosomal subunit protein bS20.